A 542-amino-acid polypeptide reads, in one-letter code: CTP synthase (542 aa).

An amidoligase domain region spans residues 1–265; that stretch reads MTRYIFVTGG…DQLVIERFGL (265 aa). Ser13 is a binding site for CTP. A UTP-binding site is contributed by Ser13. ATP is bound by residues 14–19 and Asp71; that span reads SLGKGI. Mg(2+) contacts are provided by Asp71 and Glu139. Residues 146–148, 186–191, and Lys222 each bind CTP; these read DIE and KTKPTQ. UTP-binding positions include 186–191 and Lys222; that span reads KTKPTQ. The region spanning 290 to 541 is the Glutamine amidotransferase type-1 domain; the sequence is TIAMVGKYME…VEAALANKKG (252 aa). Residue Gly351 participates in L-glutamine binding. Catalysis depends on Cys378, which acts as the Nucleophile; for glutamine hydrolysis. Residues 379–382, Glu402, and Arg469 each bind L-glutamine; that span reads LGMQ. Catalysis depends on residues His514 and Glu516.

This sequence belongs to the CTP synthase family. In terms of assembly, homotetramer.

It catalyses the reaction UTP + L-glutamine + ATP + H2O = CTP + L-glutamate + ADP + phosphate + 2 H(+). The catalysed reaction is L-glutamine + H2O = L-glutamate + NH4(+). It carries out the reaction UTP + NH4(+) + ATP = CTP + ADP + phosphate + 2 H(+). It functions in the pathway pyrimidine metabolism; CTP biosynthesis via de novo pathway; CTP from UDP: step 2/2. Its activity is regulated as follows. Allosterically activated by GTP, when glutamine is the substrate; GTP has no effect on the reaction when ammonia is the substrate. The allosteric effector GTP functions by stabilizing the protein conformation that binds the tetrahedral intermediate(s) formed during glutamine hydrolysis. Inhibited by the product CTP, via allosteric rather than competitive inhibition. In terms of biological role, catalyzes the ATP-dependent amination of UTP to CTP with either L-glutamine or ammonia as the source of nitrogen. Regulates intracellular CTP levels through interactions with the four ribonucleotide triphosphates. This chain is CTP synthase, found in Marinobacter nauticus (strain ATCC 700491 / DSM 11845 / VT8) (Marinobacter aquaeolei).